A 122-amino-acid chain; its full sequence is MEFEFIRNTLMGEYYVKCSMGHEIVGRWLQEEIGKDPAKIAQVEALIDQAFSSPSQEHRLTGAEISLMIHGDEVLVQENALGHEYEVEMESEFDFYDAESTASCGIEDFCTLIEQWKDFLNI.

The protein belongs to the UPF0231 family.

The polypeptide is UPF0231 protein VIBHAR_03438 (Vibrio campbellii (strain ATCC BAA-1116)).